Here is a 250-residue protein sequence, read N- to C-terminus: Ditrans,polycis-undecaprenyl-diphosphate synthase ((2E,6E)-farnesyl-diphosphate specific) (250 aa).

The active site involves D27. A Mg(2+)-binding site is contributed by D27. Substrate contacts are provided by residues 28-31 (GNGR), W32, R40, H44, and 72-74 (SSE). N75 functions as the Proton acceptor in the catalytic mechanism. 3 residues coordinate substrate: W76, R78, and R195. H200 serves as a coordination point for Mg(2+). 201–203 (RIS) serves as a coordination point for substrate. A Mg(2+)-binding site is contributed by E214.

This sequence belongs to the UPP synthase family. In terms of assembly, homodimer. Requires Mg(2+) as cofactor.

It carries out the reaction 8 isopentenyl diphosphate + (2E,6E)-farnesyl diphosphate = di-trans,octa-cis-undecaprenyl diphosphate + 8 diphosphate. In terms of biological role, catalyzes the sequential condensation of isopentenyl diphosphate (IPP) with (2E,6E)-farnesyl diphosphate (E,E-FPP) to yield (2Z,6Z,10Z,14Z,18Z,22Z,26Z,30Z,34E,38E)-undecaprenyl diphosphate (di-trans,octa-cis-UPP). UPP is the precursor of glycosyl carrier lipid in the biosynthesis of bacterial cell wall polysaccharide components such as peptidoglycan and lipopolysaccharide. The sequence is that of Ditrans,polycis-undecaprenyl-diphosphate synthase ((2E,6E)-farnesyl-diphosphate specific) from Blochmanniella floridana.